Here is a 524-residue protein sequence, read N- to C-terminus: Thermosome subunit 3 (524 aa).

The protein belongs to the TCP-1 chaperonin family. As to quaternary structure, the thermosome or CCT complex is a oligomeric complex of two octameric double-ring structures; the complex is probably a heterooligomer of CCT1, CCT2 and CCT3 with yet unknown stoichiometry.

Molecular chaperone that assists in the folding or refolding of nascent or denatured proteins along with ATP hydrolysis. ATPase activity is highest in thermosome assemblies containing CCT1:CCT2, followed by assemblies containing CCT1:CCT2:CCT3. Not required for thermosome ATPase activity. Not required for growth. The sequence is that of Thermosome subunit 3 (cct3) from Haloferax volcanii (strain ATCC 29605 / DSM 3757 / JCM 8879 / NBRC 14742 / NCIMB 2012 / VKM B-1768 / DS2) (Halobacterium volcanii).